A 527-amino-acid polypeptide reads, in one-letter code: Tyrosine-protein kinase TXK (527 aa).

The segment at 58 to 81 (TQSNRGGVQPSKRKPLPPLPQEPP) is disordered. Positions 82–142 (DERIQVKALY…PSNYVTENRL (61 aa)) constitute an SH3 domain. A Phosphotyrosine; by autocatalysis modification is found at Tyr91. One can recognise an SH2 domain in the interval 150-246 (WYHKNITRNQ…GLISRLRYPI (97 aa)). The Protein kinase domain occupies 271-527 (LAFVKEIGSG…QVLTEIAETW (257 aa)). Residues 277–285 (IGSGQFGVV) and Lys299 each bind ATP. Asp390 serves as the catalytic Proton acceptor. The residue at position 420 (Tyr420) is a Phosphotyrosine; by FYN and autocatalysis.

Belongs to the protein kinase superfamily. Tyr protein kinase family. TEC subfamily. Interacts with PARP1 and EEF1A1. Interacts with SH2D2A. Interacts with FYN. Post-translationally, phosphorylated at Tyr-420 by FYN. Autophosphorylation at Tyr-91 is critical for the activation of TXK, leading to the up-regulation of IFN-gamma gene transcription. In terms of processing, the cysteine string at the N-terminus is palmitoylated and required for the proper subcellular location. Expressed in early thymocytes, T-cells and mast cells.

The protein localises to the cytoplasm. It localises to the nucleus. Its subcellular location is the cell membrane. The catalysed reaction is L-tyrosyl-[protein] + ATP = O-phospho-L-tyrosyl-[protein] + ADP + H(+). Its activity is regulated as follows. Activated by phosphorylation by FYN. Its function is as follows. Non-receptor tyrosine kinase that plays a redundant role with ITK in regulation of the adaptive immune response. Regulates the development, function and differentiation of conventional T-cells and nonconventional NKT-cells. When antigen presenting cells (APC) activate T-cell receptor (TCR), a series of phosphorylation leads to the recruitment of TXK to the cell membrane, where it is phosphorylated at Tyr-420. Phosphorylation leads to TXK full activation. Also contributes to signaling from many receptors and participates in multiple downstream pathways, including regulation of the actin cytoskeleton. Like ITK, can phosphorylate PLCG1, leading to its localization in lipid rafts and activation, followed by subsequent cleavage of its substrates. In turn, the endoplasmic reticulum releases calcium in the cytoplasm and the nuclear activator of activated T-cells (NFAT) translocates into the nucleus to perform its transcriptional duty. Plays a role in the positive regulation of IFNG transcription in T-helper 1 cells as part of an IFNG promoter-binding complex with PARP1 and EEF1A1. Within the complex, phosphorylates both PARP1 and EEF1A1. Also phosphorylates key sites in LCP2 leading to the up-regulation of Th1 preferred cytokine IL-2. Phosphorylates 'Tyr-201' of CTLA4 which leads to the association of PI-3 kinase with the CTLA4 receptor. The chain is Tyrosine-protein kinase TXK (Txk) from Mus musculus (Mouse).